We begin with the raw amino-acid sequence, 92 residues long: Alpha-conotoxin-like Mi20.2 (92 aa).

The first 24 residues, 1–24, serve as a signal peptide directing secretion; that stretch reads MPKLEMMLLVLLILPLSSFSAAGE. The propeptide occupies 25-45; the sequence is QVVQGDQRSDGLARYLQRGGR. 4-carboxyglutamate is present on glutamate 49. Proline 55 carries the post-translational modification 4-hydroxyproline. 4 disulfides stabilise this stretch: cysteine 63/cysteine 72, cysteine 68/cysteine 80, cysteine 73/cysteine 90, and cysteine 78/cysteine 92.

Belongs to the conotoxin D superfamily. Hetero-, homo- or pseudo-homodimer (identical sequence, different post-translational modifications). In terms of tissue distribution, expressed by the venom duct.

The protein localises to the secreted. Alpha-conotoxins act on postsynaptic membranes, they bind to the nicotinic acetylcholine receptors (nAChR) and thus inhibit them. Through its two C-terminal domains, this homodimeric protein would bind to two nAChR allosteric sites, located outside the nAChR C-loop of the principal binding face and at the adjacent binding interface in a clockwise direction. This toxin specifically blocks mammalian neuronal nAChR of the alpha-7/CHRNA7, alpha-3-beta-2/CHRNA3-CHRNB2 and alpha-4-beta-2/CHRNA4-CHRNB2 subtypes. This chain is Alpha-conotoxin-like Mi20.2, found in Conus miles (Soldier cone).